An 83-amino-acid polypeptide reads, in one-letter code: Small ribosomal subunit protein eS21 (83 aa).

Residue Met1 is modified to N-acetylmethionine. Lys41 is covalently cross-linked (Glycyl lysine isopeptide (Lys-Gly) (interchain with G-Cter in SUMO2)).

This sequence belongs to the eukaryotic ribosomal protein eS21 family. Component of the 40S small ribosomal subunit.

The protein resides in the cytoplasm. The protein localises to the cytosol. Its subcellular location is the rough endoplasmic reticulum. Functionally, component of the small ribosomal subunit. The ribosome is a large ribonucleoprotein complex responsible for the synthesis of proteins in the cell. The sequence is that of Small ribosomal subunit protein eS21 (RPS21) from Oryctolagus cuniculus (Rabbit).